We begin with the raw amino-acid sequence, 1346 residues long: Adhesion G protein-coupled receptor A3 (1346 aa).

Residues 1–21 (MSVLCVLLLAFVLPLRGSSSA) form the signal peptide. The disordered stretch occupies residues 18-45 (SSSAGSTECKTYDERSRSAGKSSPSGAT). The Extracellular portion of the chain corresponds to 22–739 (GSTECKTYDE…NVFIFRPLHP (718 aa)). LRR repeat units lie at residues 66–90 (FPNR…SFVG), 91–114 (LSSL…AFYG), 116–138 (FSLK…VFKG), and 139–162 (LTNL…IFDS). The LRRCT domain occupies 176 to 223 (LLCDCNLQWLVVWIKEKAIGVKETRCSFPRSLQGQLITTLRAETLTCD). The Ig-like domain occupies 229–327 (PSFQMTPSQH…GNNTRTVHIV (99 aa)). Residues cysteine 251 and cysteine 311 are joined by a disulfide bond. 3 LRR repeats span residues 503–529 (LQRI…ALEA), 574–600 (TSNL…LFSS), and 611–632 (VYKL…GNSS). The region spanning 563–728 (PERQLSFKCN…AVLMDLNRTG (166 aa)) is the GAIN-B domain. The GPS stretch occupies residues 679 to 728 (PAFWNFSLQGGQGGWQSDGCRILHQDDNFTTVSCHSLNSYAVLMDLNRTG). Cysteine 698 and cysteine 712 are joined by a disulfide. The helical transmembrane segment at 740-760 (VIYSTALVLVLCLLSVIVSYI) threads the bilayer. Residues 761–773 (YHHKSVRISKKCW) are Cytoplasmic-facing. A helical membrane pass occupies residues 774–794 (HMLVNLCLHILLTCAVFVGGI). At 795-804 (NQTYNASVCQ) the chain is on the extracellular side. A helical membrane pass occupies residues 805 to 825 (AMGIVLHYSTLATALWSGVTA). Over 826–854 (RNIYKQVTRKAKRYEELDEPPPPPRPMLR) the chain is Cytoplasmic. A helical transmembrane segment spans residues 855–875 (FYLIGGGIPIIVCGITAAANI). Residues 876–897 (KNYGSQVNAPYCWMAWEPSLGA) are Extracellular-facing. Residues 898–918 (FYGPAAFIVFVDCMYFLSILI) traverse the membrane as a helical segment. Residues 919 to 977 (QLRRHPERRFELKEQSEEQQHLSVTEATEITPVHLESSPTAQPVPMSALENEHTFVSQL) are Cytoplasmic-facing. Residues 978–998 (MGVAGSLTLYAALWVFGALAI) traverse the membrane as a helical segment. The Extracellular portion of the chain corresponds to 999–1005 (SQEHPAD). Residues 1006-1026 (LVFACLFGALALGLGAFLVAH) form a helical membrane-spanning segment. Residues 1027–1346 (HCVNRQDMRR…TGLWKHETTV (320 aa)) are Cytoplasmic-facing. A compositionally biased stretch (polar residues) spans 1157–1169 (SVNNNNLPGNANI). 2 disordered regions span residues 1157–1188 (SVNN…RASR) and 1202–1284 (SVEG…DGSE). 2 stretches are compositionally biased toward basic residues: residues 1173 to 1187 (PGRH…HRAS) and 1212 to 1226 (NKRH…RNSR). Residues 1238-1252 (QSQLQQDSSDAASTS) show a composition bias toward low complexity. The span at 1266–1280 (IGNGFGHGISNGGLL) shows a compositional bias: gly residues. The PDZ-binding signature appears at 1344–1346 (TTV).

Belongs to the G-protein coupled receptor 2 family. Adhesion G-protein coupled receptor (ADGR) subfamily. Interacts (via PDZ-binding motif) with disheveled proteins; leading to the localization of dishevelled proteins to specific membrane subdomains. As to expression, ubiquitously expressed at very low levels.

The protein resides in the cell membrane. Functionally, orphan receptor that acts as a critical modulator of planar cell polarity during gastrulation. Controls the localization of dishevelled. The chain is Adhesion G protein-coupled receptor A3 (adgra3) from Danio rerio (Zebrafish).